Reading from the N-terminus, the 321-residue chain is Ribonuclease Z (321 aa).

The Zn(2+) site is built by His62, His64, Asp66, His67, His139, Asp210, and His268. The active-site Proton acceptor is Asp66.

It belongs to the RNase Z family. As to quaternary structure, homodimer. Requires Zn(2+) as cofactor.

The catalysed reaction is Endonucleolytic cleavage of RNA, removing extra 3' nucleotides from tRNA precursor, generating 3' termini of tRNAs. A 3'-hydroxy group is left at the tRNA terminus and a 5'-phosphoryl group is left at the trailer molecule.. Its function is as follows. Zinc phosphodiesterase, which displays some tRNA 3'-processing endonuclease activity. Probably involved in tRNA maturation, by removing a 3'-trailer from precursor tRNA. This chain is Ribonuclease Z, found in Trichodesmium erythraeum (strain IMS101).